The primary structure comprises 238 residues: Ankyrin repeat domain-containing protein 49 (238 aa).

The residue at position 48 (Ser-48) is a Phosphoserine. ANK repeat units lie at residues 77-105, 106-135, 139-168, and 172-205; these read LLWAAEKNRLTTVQRLLSERATHVNTRDE, DKYTPLHRAAYNGHLDVVRELIAHGADVHA, DGWTPLHSACKWNNARVASFLLQHDADVNA, and GLLTPLHLAAGNRDSKDTLELLLMNRYIKPGLKN.

Its subcellular location is the nucleus. Its function is as follows. May have a role in spermatogenesis where it promotes autophagy in response to serum starvation, via the NF-kappaB pathway. The sequence is that of Ankyrin repeat domain-containing protein 49 (ANKRD49) from Bos taurus (Bovine).